A 112-amino-acid chain; its full sequence is MDISRMGAQAQITSLEELSGGPAGAAHVAEFERAMGGAGSLGGDLLSELGQIRERFSQAKQELQMELSTPGDDPNSLMQMQWSLMRITMQEELIAKTVGRMSQNVETLMKTQ.

The protein belongs to the YscI/HrpB family. In terms of assembly, homomultimer (through its C-terminal region).

Functionally, component of the type III secretion (T3S) injectisome that translocates effector toxins into host cells, facilitating the establishment and dissemination of infection. Polymerizes into flexible and regularly twisted fibrils and plays an essential role in needle assembly. This chain is Type III inner-rod protein PscI (pscI), found in Pseudomonas aeruginosa (strain ATCC 15692 / DSM 22644 / CIP 104116 / JCM 14847 / LMG 12228 / 1C / PRS 101 / PAO1).